Reading from the N-terminus, the 338-residue chain is Aspartate carbamoyltransferase catalytic subunit (338 aa).

Residues R72 and T73 each coordinate carbamoyl phosphate. K100 contributes to the L-aspartate binding site. Carbamoyl phosphate is bound by residues R122, H152, and Q155. Positions 186 and 243 each coordinate L-aspartate. Carbamoyl phosphate contacts are provided by G284 and P285.

It belongs to the aspartate/ornithine carbamoyltransferase superfamily. ATCase family. In terms of assembly, heterododecamer (2C3:3R2) of six catalytic PyrB chains organized as two trimers (C3), and six regulatory PyrI chains organized as three dimers (R2).

It catalyses the reaction carbamoyl phosphate + L-aspartate = N-carbamoyl-L-aspartate + phosphate + H(+). It functions in the pathway pyrimidine metabolism; UMP biosynthesis via de novo pathway; (S)-dihydroorotate from bicarbonate: step 2/3. Catalyzes the condensation of carbamoyl phosphate and aspartate to form carbamoyl aspartate and inorganic phosphate, the committed step in the de novo pyrimidine nucleotide biosynthesis pathway. This Acinetobacter baumannii (strain SDF) protein is Aspartate carbamoyltransferase catalytic subunit.